The following is a 419-amino-acid chain: Gamma-glutamyl phosphate reductase (419 aa).

The protein belongs to the gamma-glutamyl phosphate reductase family.

It is found in the cytoplasm. It catalyses the reaction L-glutamate 5-semialdehyde + phosphate + NADP(+) = L-glutamyl 5-phosphate + NADPH + H(+). Its pathway is amino-acid biosynthesis; L-proline biosynthesis; L-glutamate 5-semialdehyde from L-glutamate: step 2/2. Functionally, catalyzes the NADPH-dependent reduction of L-glutamate 5-phosphate into L-glutamate 5-semialdehyde and phosphate. The product spontaneously undergoes cyclization to form 1-pyrroline-5-carboxylate. The sequence is that of Gamma-glutamyl phosphate reductase from Maridesulfovibrio salexigens (strain ATCC 14822 / DSM 2638 / NCIMB 8403 / VKM B-1763) (Desulfovibrio salexigens).